Here is a 125-residue protein sequence, read N- to C-terminus: Large ribosomal subunit protein bL12 (125 aa).

A disordered region spans residues A95 to K125.

The protein belongs to the bacterial ribosomal protein bL12 family. Homodimer. Part of the ribosomal stalk of the 50S ribosomal subunit. Forms a multimeric L10(L12)X complex, where L10 forms an elongated spine to which 2 to 4 L12 dimers bind in a sequential fashion. Binds GTP-bound translation factors.

Forms part of the ribosomal stalk which helps the ribosome interact with GTP-bound translation factors. Is thus essential for accurate translation. The sequence is that of Large ribosomal subunit protein bL12 from Polynucleobacter necessarius subsp. necessarius (strain STIR1).